The chain runs to 878 residues: Leucine--tRNA ligase (878 aa).

The 'HIGH' region signature appears at 43–53 (PYPSGRIHIGH). Residues 630–634 (KMSKS) carry the 'KMSKS' region motif. Residue K633 participates in ATP binding.

It belongs to the class-I aminoacyl-tRNA synthetase family.

Its subcellular location is the cytoplasm. The enzyme catalyses tRNA(Leu) + L-leucine + ATP = L-leucyl-tRNA(Leu) + AMP + diphosphate. This is Leucine--tRNA ligase from Nitrobacter hamburgensis (strain DSM 10229 / NCIMB 13809 / X14).